The sequence spans 931 residues: Isoleucine--tRNA ligase (931 aa).

Positions Pro57 to His67 match the 'HIGH' region motif. Glu556 is a binding site for L-isoleucyl-5'-AMP. The 'KMSKS' region signature appears at Lys597–Ser601. Residue Lys600 participates in ATP binding. The Zn(2+) site is built by Cys890, Cys893, Cys910, and Cys913.

The protein belongs to the class-I aminoacyl-tRNA synthetase family. IleS type 1 subfamily. As to quaternary structure, monomer. Requires Zn(2+) as cofactor.

Its subcellular location is the cytoplasm. It catalyses the reaction tRNA(Ile) + L-isoleucine + ATP = L-isoleucyl-tRNA(Ile) + AMP + diphosphate. Catalyzes the attachment of isoleucine to tRNA(Ile). As IleRS can inadvertently accommodate and process structurally similar amino acids such as valine, to avoid such errors it has two additional distinct tRNA(Ile)-dependent editing activities. One activity is designated as 'pretransfer' editing and involves the hydrolysis of activated Val-AMP. The other activity is designated 'posttransfer' editing and involves deacylation of mischarged Val-tRNA(Ile). This chain is Isoleucine--tRNA ligase, found in Lactobacillus delbrueckii subsp. bulgaricus (strain ATCC 11842 / DSM 20081 / BCRC 10696 / JCM 1002 / NBRC 13953 / NCIMB 11778 / NCTC 12712 / WDCM 00102 / Lb 14).